Consider the following 420-residue polypeptide: Glucose-1-phosphate adenylyltransferase (420 aa).

Alpha-D-glucose 1-phosphate-binding positions include Tyr-107, Gly-172, 187 to 188 (EK), and Ser-205.

Belongs to the bacterial/plant glucose-1-phosphate adenylyltransferase family. As to quaternary structure, homotetramer.

The enzyme catalyses alpha-D-glucose 1-phosphate + ATP + H(+) = ADP-alpha-D-glucose + diphosphate. The protein operates within glycan biosynthesis; glycogen biosynthesis. In terms of biological role, involved in the biosynthesis of ADP-glucose, a building block required for the elongation reactions to produce glycogen. Catalyzes the reaction between ATP and alpha-D-glucose 1-phosphate (G1P) to produce pyrophosphate and ADP-Glc. The chain is Glucose-1-phosphate adenylyltransferase from Rhizobium etli (strain CIAT 652).